Consider the following 559-residue polypeptide: Formate--tetrahydrofolate ligase (559 aa).

Residue 68–75 (TPAGEGKT) coordinates ATP.

Belongs to the formate--tetrahydrofolate ligase family.

The catalysed reaction is (6S)-5,6,7,8-tetrahydrofolate + formate + ATP = (6R)-10-formyltetrahydrofolate + ADP + phosphate. Its pathway is one-carbon metabolism; tetrahydrofolate interconversion. The chain is Formate--tetrahydrofolate ligase from Rhizobium etli (strain CIAT 652).